Here is a 161-residue protein sequence, read N- to C-terminus: Putative sporulation sigma factor-processing peptidase (161 aa).

Residue D38 is part of the active site.

It belongs to the peptidase U4 family.

In terms of biological role, probably activates the RNA polymerase sigma-35 factor at the stage II of sporulation. In Bacillus thuringiensis subsp. kurstaki, this protein is Putative sporulation sigma factor-processing peptidase.